A 340-amino-acid polypeptide reads, in one-letter code: Phosphoribosylformylglycinamidine cyclo-ligase (340 aa).

The protein belongs to the AIR synthase family.

It is found in the cytoplasm. The catalysed reaction is 2-formamido-N(1)-(5-O-phospho-beta-D-ribosyl)acetamidine + ATP = 5-amino-1-(5-phospho-beta-D-ribosyl)imidazole + ADP + phosphate + H(+). It functions in the pathway purine metabolism; IMP biosynthesis via de novo pathway; 5-amino-1-(5-phospho-D-ribosyl)imidazole from N(2)-formyl-N(1)-(5-phospho-D-ribosyl)glycinamide: step 2/2. This chain is Phosphoribosylformylglycinamidine cyclo-ligase, found in Streptococcus pyogenes serotype M3 (strain ATCC BAA-595 / MGAS315).